A 70-amino-acid polypeptide reads, in one-letter code: MPGAMKIFFFIFAALILLAQIFQARTAIHRALISKRMEGHCEAECLTFEVKTGGCRAELAPFCCKNRKKH.

An N-terminal signal peptide occupies residues 1 to 26 (MPGAMKIFFFIFAALILLAQIFQART). 2 cysteine pairs are disulfide-bonded: Cys-41-Cys-55 and Cys-45-Cys-64.

This sequence belongs to the beta-defensin family.

The protein resides in the secreted. In terms of biological role, has antibacterial activity. The sequence is that of Beta-defensin 107A (DEFB107A) from Pan troglodytes (Chimpanzee).